We begin with the raw amino-acid sequence, 923 residues long: Isoleucine--tRNA ligase (923 aa).

The 'HIGH' region signature appears at 57–67 (PYANGDIHMGH). Glutamate 553 is an L-isoleucyl-5'-AMP binding site. The short motif at 594–598 (KMSKS) is the 'KMSKS' region element. Position 597 (lysine 597) interacts with ATP. Zn(2+)-binding residues include cysteine 888, cysteine 891, cysteine 908, and cysteine 911.

The protein belongs to the class-I aminoacyl-tRNA synthetase family. IleS type 1 subfamily. Monomer. The cofactor is Zn(2+).

It localises to the cytoplasm. The enzyme catalyses tRNA(Ile) + L-isoleucine + ATP = L-isoleucyl-tRNA(Ile) + AMP + diphosphate. Functionally, catalyzes the attachment of isoleucine to tRNA(Ile). As IleRS can inadvertently accommodate and process structurally similar amino acids such as valine, to avoid such errors it has two additional distinct tRNA(Ile)-dependent editing activities. One activity is designated as 'pretransfer' editing and involves the hydrolysis of activated Val-AMP. The other activity is designated 'posttransfer' editing and involves deacylation of mischarged Val-tRNA(Ile). In Shouchella clausii (strain KSM-K16) (Alkalihalobacillus clausii), this protein is Isoleucine--tRNA ligase.